Consider the following 502-residue polypeptide: Probable cytochrome P450 6a23 (502 aa).

A heme-binding site is contributed by Cys445.

It belongs to the cytochrome P450 family. The cofactor is heme.

It is found in the endoplasmic reticulum membrane. The protein localises to the microsome membrane. In terms of biological role, may be involved in the metabolism of insect hormones and in the breakdown of synthetic insecticides. In Drosophila melanogaster (Fruit fly), this protein is Probable cytochrome P450 6a23 (Cyp6a23).